The sequence spans 426 residues: Serine--tRNA ligase (426 aa).

232–234 (TAE) is an L-serine binding site. 263–265 (RRE) serves as a coordination point for ATP. An L-serine-binding site is contributed by glutamate 286. ATP is bound at residue 350–353 (EISS). Position 385 (serine 385) interacts with L-serine.

Belongs to the class-II aminoacyl-tRNA synthetase family. Type-1 seryl-tRNA synthetase subfamily. Homodimer. The tRNA molecule binds across the dimer.

It localises to the cytoplasm. It carries out the reaction tRNA(Ser) + L-serine + ATP = L-seryl-tRNA(Ser) + AMP + diphosphate + H(+). The catalysed reaction is tRNA(Sec) + L-serine + ATP = L-seryl-tRNA(Sec) + AMP + diphosphate + H(+). Its pathway is aminoacyl-tRNA biosynthesis; selenocysteinyl-tRNA(Sec) biosynthesis; L-seryl-tRNA(Sec) from L-serine and tRNA(Sec): step 1/1. Functionally, catalyzes the attachment of serine to tRNA(Ser). Is also able to aminoacylate tRNA(Sec) with serine, to form the misacylated tRNA L-seryl-tRNA(Sec), which will be further converted into selenocysteinyl-tRNA(Sec). The sequence is that of Serine--tRNA ligase from Fervidobacterium nodosum (strain ATCC 35602 / DSM 5306 / Rt17-B1).